Reading from the N-terminus, the 270-residue chain is Cyclase-like protein 3 (270 aa).

A signal peptide spans 1 to 23 (MMAHLAPLFLLLLLLLLPLHAAA).

Belongs to the Cyclase 1 superfamily. In terms of tissue distribution, highly expressed in leaf sheaths. leaf collars and flag leaves. Expressed in roots, stems, glumes, young panicles and pistils.

It is found in the secreted. It localises to the extracellular space. Its subcellular location is the extracellular matrix. May be involved in response to stresses. In Oryza sativa subsp. japonica (Rice), this protein is Cyclase-like protein 3.